The chain runs to 418 residues: D-amino acid dehydrogenase (418 aa).

3–17 (VLILGSGVVGVATAY) serves as a coordination point for FAD.

Belongs to the DadA oxidoreductase family. It depends on FAD as a cofactor.

The catalysed reaction is a D-alpha-amino acid + A + H2O = a 2-oxocarboxylate + AH2 + NH4(+). The protein operates within amino-acid degradation; D-alanine degradation; NH(3) and pyruvate from D-alanine: step 1/1. Its function is as follows. Oxidative deamination of D-amino acids. The polypeptide is D-amino acid dehydrogenase (Granulibacter bethesdensis (strain ATCC BAA-1260 / CGDNIH1)).